Reading from the N-terminus, the 224-residue chain is SPI-2 type 3 secretion system stator protein (224 aa).

The protein belongs to the SctL stator family. The core secretion machinery of the T3SS is composed of approximately 20 different proteins, including cytoplasmic components, a base, an export apparatus and a needle. This subunit is part of the cytosolic complex. Interacts directly with SsaN/SctN2 (T3SS-2 ATPase).

It is found in the cytoplasm. In terms of biological role, component of the type III secretion system (T3SS), also called injectisome, which is used to inject bacterial effector proteins into eukaryotic host cells. Acts as a regulator of the SsaN/SctN2 ATPase activity. This is SPI-2 type 3 secretion system stator protein from Salmonella typhimurium (strain LT2 / SGSC1412 / ATCC 700720).